The primary structure comprises 201 residues: 3-isopropylmalate dehydratase small subunit (201 aa).

Belongs to the LeuD family. LeuD type 1 subfamily. Heterodimer of LeuC and LeuD.

The catalysed reaction is (2R,3S)-3-isopropylmalate = (2S)-2-isopropylmalate. Its pathway is amino-acid biosynthesis; L-leucine biosynthesis; L-leucine from 3-methyl-2-oxobutanoate: step 2/4. Functionally, catalyzes the isomerization between 2-isopropylmalate and 3-isopropylmalate, via the formation of 2-isopropylmaleate. The protein is 3-isopropylmalate dehydratase small subunit of Kineococcus radiotolerans (strain ATCC BAA-149 / DSM 14245 / SRS30216).